A 129-amino-acid polypeptide reads, in one-letter code: uncharacterized protein (129 aa).

C2H2-type zinc fingers lie at residues 75-99 and 101-124; these read FVCP…YTEH and KVCP…CKKH.

Essential for virus function. This is an uncharacterized protein from Saccharolobus solfataricus (Sulfolobus solfataricus).